The primary structure comprises 426 residues: Serine hydroxymethyltransferase (426 aa).

(6S)-5,6,7,8-tetrahydrofolate contacts are provided by residues Leu-121 and 125 to 127; that span reads GHL. The residue at position 230 (Lys-230) is an N6-(pyridoxal phosphate)lysine. 354-356 is a (6S)-5,6,7,8-tetrahydrofolate binding site; it reads SPF.

It belongs to the SHMT family. As to quaternary structure, homodimer. Requires pyridoxal 5'-phosphate as cofactor.

The protein resides in the cytoplasm. The enzyme catalyses (6R)-5,10-methylene-5,6,7,8-tetrahydrofolate + glycine + H2O = (6S)-5,6,7,8-tetrahydrofolate + L-serine. It functions in the pathway one-carbon metabolism; tetrahydrofolate interconversion. Its pathway is amino-acid biosynthesis; glycine biosynthesis; glycine from L-serine: step 1/1. Functionally, catalyzes the reversible interconversion of serine and glycine with tetrahydrofolate (THF) serving as the one-carbon carrier. This reaction serves as the major source of one-carbon groups required for the biosynthesis of purines, thymidylate, methionine, and other important biomolecules. Also exhibits THF-independent aldolase activity toward beta-hydroxyamino acids, producing glycine and aldehydes, via a retro-aldol mechanism. This is Serine hydroxymethyltransferase from Gloeobacter violaceus (strain ATCC 29082 / PCC 7421).